The chain runs to 138 residues: Basic phospholipase A2 DsM-b1/DsM-b1' (138 aa).

Residues 1 to 16 (MRTLWIVAMCLIGVEG) form the signal peptide. Intrachain disulfides connect C42–C131, C44–C60, C59–C111, C65–C138, C66–C104, C73–C97, and C91–C102. Positions 43, 45, and 47 each coordinate Ca(2+). H63 is an active-site residue. D64 is a binding site for Ca(2+). The active site involves D105.

It depends on Ca(2+) as a cofactor. Expressed by the venom gland.

It localises to the secreted. The catalysed reaction is a 1,2-diacyl-sn-glycero-3-phosphocholine + H2O = a 1-acyl-sn-glycero-3-phosphocholine + a fatty acid + H(+). Functionally, exhibits high hydrolytic activities and shows strong preference for the anionic micelles (dPPC with deoxycholate) to the zwitterionic micelles (dPPC with Triton X-100). PLA2 catalyzes the calcium-dependent hydrolysis of the 2-acyl groups in 3-sn-phosphoglycerides. The polypeptide is Basic phospholipase A2 DsM-b1/DsM-b1' (Daboia siamensis (Eastern Russel's viper)).